The following is a 122-amino-acid chain: MARIAGVDLPREKRIEVALTYIYGIGRSTARRVIRETGVDPDTRVRDLAEGEIAALRRYIDENLKVEGDLKREVNQNIRRLMDIGCYRGLRHRRGLPVRGQRTKTNARQRKGPRPAIGGRKK.

The disordered stretch occupies residues 94 to 122 (RGLPVRGQRTKTNARQRKGPRPAIGGRKK).

Belongs to the universal ribosomal protein uS13 family. As to quaternary structure, part of the 30S ribosomal subunit. Forms a loose heterodimer with protein S19. Forms two bridges to the 50S subunit in the 70S ribosome.

Functionally, located at the top of the head of the 30S subunit, it contacts several helices of the 16S rRNA. In the 70S ribosome it contacts the 23S rRNA (bridge B1a) and protein L5 of the 50S subunit (bridge B1b), connecting the 2 subunits; these bridges are implicated in subunit movement. Contacts the tRNAs in the A and P-sites. This Rubrobacter xylanophilus (strain DSM 9941 / JCM 11954 / NBRC 16129 / PRD-1) protein is Small ribosomal subunit protein uS13.